Consider the following 174-residue polypeptide: MKKLYKAITVICILMSNLQSAQGATKSVQVPIRTEVKIPTCQLEIDSSIDFSFVKIEDIISSRATSKEANLNFRCDAHVDNVRIMFVPGSNRTSSDKRVMHSGTTGLGYSLQWSRASSGYSDIGFNTQYQWSDSDAYQNLLSGKLRLKPVSFPGESLSKEGKVSSTINIEVTYD.

An N-terminal signal peptide occupies residues 1 to 21 (MKKLYKAITVICILMSNLQSA). A disulfide bridge connects residues cysteine 41 and cysteine 75.

It is found in the fimbrium. Functionally, involved in the biosynthesis of K99 fimbriae. This chain is Protein FanG (fanG), found in Escherichia coli.